A 129-amino-acid polypeptide reads, in one-letter code: Glycine cleavage system H protein (129 aa).

The Lipoyl-binding domain occupies 24–106 (SYTVGISEHA…FGDGWFFRVM (83 aa)). The residue at position 65 (Lys-65) is an N6-lipoyllysine.

This sequence belongs to the GcvH family. The glycine cleavage system is composed of four proteins: P, T, L and H. (R)-lipoate is required as a cofactor.

In terms of biological role, the glycine cleavage system catalyzes the degradation of glycine. The H protein shuttles the methylamine group of glycine from the P protein to the T protein. The polypeptide is Glycine cleavage system H protein (Shewanella sediminis (strain HAW-EB3)).